Reading from the N-terminus, the 418-residue chain is UDP-N-acetylglucosamine 1-carboxyvinyltransferase (418 aa).

23–24 is a phosphoenolpyruvate binding site; that stretch reads KN. Arg-93 is a UDP-N-acetyl-alpha-D-glucosamine binding site. Asp-117 (proton donor) is an active-site residue. Residues Asp-305 and Ile-327 each coordinate UDP-N-acetyl-alpha-D-glucosamine.

It belongs to the EPSP synthase family. MurA subfamily.

Its subcellular location is the cytoplasm. The enzyme catalyses phosphoenolpyruvate + UDP-N-acetyl-alpha-D-glucosamine = UDP-N-acetyl-3-O-(1-carboxyvinyl)-alpha-D-glucosamine + phosphate. It functions in the pathway cell wall biogenesis; peptidoglycan biosynthesis. In terms of biological role, cell wall formation. Adds enolpyruvyl to UDP-N-acetylglucosamine. This chain is UDP-N-acetylglucosamine 1-carboxyvinyltransferase, found in Corynebacterium jeikeium (strain K411).